A 209-amino-acid chain; its full sequence is Uracil phosphoribosyltransferase (209 aa).

5-phospho-alpha-D-ribose 1-diphosphate contacts are provided by residues Arg-79, Arg-104, and 131–139; that span reads DPMLATGGS. Residues Ile-194 and 199–201 each bind uracil; that span reads GDA. Position 200 (Asp-200) interacts with 5-phospho-alpha-D-ribose 1-diphosphate.

It belongs to the UPRTase family. Requires Mg(2+) as cofactor.

It carries out the reaction UMP + diphosphate = 5-phospho-alpha-D-ribose 1-diphosphate + uracil. It functions in the pathway pyrimidine metabolism; UMP biosynthesis via salvage pathway; UMP from uracil: step 1/1. With respect to regulation, allosterically activated by GTP. In terms of biological role, catalyzes the conversion of uracil and 5-phospho-alpha-D-ribose 1-diphosphate (PRPP) to UMP and diphosphate. This chain is Uracil phosphoribosyltransferase, found in Clostridium beijerinckii (strain ATCC 51743 / NCIMB 8052) (Clostridium acetobutylicum).